The sequence spans 206 residues: LexA repressor (206 aa).

The H-T-H motif DNA-binding region spans 28-48 (RAEIATRLGFKSANAAEEHLK). Residues Ser-123 and Lys-160 each act as for autocatalytic cleavage activity in the active site.

The protein belongs to the peptidase S24 family. In terms of assembly, homodimer.

It carries out the reaction Hydrolysis of Ala-|-Gly bond in repressor LexA.. Its function is as follows. Represses a number of genes involved in the response to DNA damage (SOS response), including recA and lexA. In the presence of single-stranded DNA, RecA interacts with LexA causing an autocatalytic cleavage which disrupts the DNA-binding part of LexA, leading to derepression of the SOS regulon and eventually DNA repair. The protein is LexA repressor of Shewanella sp. (strain MR-7).